We begin with the raw amino-acid sequence, 190 residues long: Ribosome hibernation promotion factor (190 aa).

It belongs to the HPF/YfiA ribosome-associated protein family. Long HPF subfamily. Interacts with 100S ribosomes.

The protein resides in the cytoplasm. Required for dimerization of active 70S ribosomes into 100S ribosomes in stationary phase; 100S ribosomes are translationally inactive and sometimes present during exponential growth. The polypeptide is Ribosome hibernation promotion factor (Rhizobium meliloti (strain 1021) (Ensifer meliloti)).